The primary structure comprises 452 residues: Probable ECA polymerase (452 aa).

Helical transmembrane passes span 6–26 (FSGL…LTWF), 37–57 (VFFS…TSVL), 63–83 (VGVA…CFYG), 118–138 (VILM…NGFL), 155–175 (GVAL…VYFL), 181–201 (AWLF…MIVG), 207–227 (IIIA…ISLW), 228–248 (MLAA…LKRY), 341–361 (LVVM…GLII), 378–398 (YKAA…IVLA), and 410–430 (VFFL…FWLF).

Belongs to the WzyE family. As to quaternary structure, probably part of a complex composed of WzxE, WzyE and WzzE.

The protein localises to the cell inner membrane. Its pathway is bacterial outer membrane biogenesis; enterobacterial common antigen biosynthesis. Its function is as follows. Probably involved in the polymerization of enterobacterial common antigen (ECA) trisaccharide repeat units. This is Probable ECA polymerase from Salmonella heidelberg (strain SL476).